The following is a 226-amino-acid chain: ATP-dependent dethiobiotin synthetase BioD (226 aa).

12–17 (GIGKTV) contributes to the ATP binding site. Residue threonine 16 coordinates Mg(2+). Lysine 37 is an active-site residue. Residue threonine 41 coordinates substrate. ATP is bound by residues aspartate 49, 108 to 111 (EGAG), 169 to 170 (GS), and 197 to 199 (PAG). The Mg(2+) site is built by aspartate 49 and glutamate 108.

The protein belongs to the dethiobiotin synthetase family. As to quaternary structure, homodimer. Requires Mg(2+) as cofactor.

The protein localises to the cytoplasm. It carries out the reaction (7R,8S)-7,8-diammoniononanoate + CO2 + ATP = (4R,5S)-dethiobiotin + ADP + phosphate + 3 H(+). It participates in cofactor biosynthesis; biotin biosynthesis; biotin from 7,8-diaminononanoate: step 1/2. Functionally, catalyzes a mechanistically unusual reaction, the ATP-dependent insertion of CO2 between the N7 and N8 nitrogen atoms of 7,8-diaminopelargonic acid (DAPA, also called 7,8-diammoniononanoate) to form a ureido ring. This is ATP-dependent dethiobiotin synthetase BioD from Mycolicibacterium gilvum (strain PYR-GCK) (Mycobacterium gilvum (strain PYR-GCK)).